The chain runs to 472 residues: Adenosylhomocysteinase (472 aa).

Positions 61, 136, and 196 each coordinate substrate. T197–T199 is an NAD(+) binding site. Positions 226 and 230 each coordinate substrate. NAD(+) is bound by residues N231, G260–G265, E283, N318, I339–H341, and N384.

It belongs to the adenosylhomocysteinase family. The cofactor is NAD(+).

The protein resides in the cytoplasm. It carries out the reaction S-adenosyl-L-homocysteine + H2O = L-homocysteine + adenosine. It participates in amino-acid biosynthesis; L-homocysteine biosynthesis; L-homocysteine from S-adenosyl-L-homocysteine: step 1/1. May play a key role in the regulation of the intracellular concentration of adenosylhomocysteine. The sequence is that of Adenosylhomocysteinase from Cupriavidus pinatubonensis (strain JMP 134 / LMG 1197) (Cupriavidus necator (strain JMP 134)).